The following is a 904-amino-acid chain: Envelope glycoprotein B (904 aa).

The N-terminal stretch at 1 to 22 (MRGGGLICALVVGALVAAVASA) is a signal peptide. Residues 23–771 (APAAPAAPRA…SGVSSFMSNP (749 aa)) are Virion surface-facing. The interval 40–83 (VAANGGPASRPPPVPSPATTKARKRKTKKPPKRPEATPPPDANA) is disordered. Residues 60-70 (KARKRKTKKPP) are compositionally biased toward basic residues. 2 N-linked (GlcNAc...) asparagine; by host glycosylation sites follow: N82 and N136. 5 disulfide bridges follow: C111-C570, C128-C526, C202-C266, C359-C407, and C593-C630. Involved in fusion and/or binding to host membrane regions lie at residues 168 to 174 (VWFGHRY) and 253 to 260 (RVEAFHRY). 3 N-linked (GlcNAc...) asparagine; by host glycosylation sites follow: N393, N425, and N486. Residues 467 to 490 (QDRKPRNATPAPLREAPSANASVE) form a disordered region. N671 carries N-linked (GlcNAc...) asparagine; by host glycosylation. Hydrophobic membrane proximal region stretches follow at residues 716-769 (IDTV…SFMS) and 728-768 (MFAG…SSFM). Residues 772–792 (FGALAVGLLVLAGLVAAFFAF) form a helical membrane-spanning segment. The Intravirion portion of the chain corresponds to 793-904 (RYVLQLQRNP…EDEAGDEDEL (112 aa)). A disordered region spans residues 816 to 835 (TSDPGGVGGEGEEGAEGGGF). The Golgi targeting signature appears at 849 to 852 (YMAL). A disordered region spans residues 883–904 (KRNKARYSPLHNEDEAGDEDEL). The Internalization motif motif lies at 889–892 (YSPL).

The protein belongs to the herpesviridae glycoprotein B family. Homotrimer; disulfide-linked. Binds to heparan sulfate proteoglycans. Interacts with gH/gL heterodimer.

It is found in the virion membrane. The protein resides in the host cell membrane. The protein localises to the host endosome membrane. Its subcellular location is the host Golgi apparatus membrane. Functionally, envelope glycoprotein that forms spikes at the surface of virion envelope. Essential for the initial attachment to heparan sulfate moieties of the host cell surface proteoglycans. Involved in fusion of viral and cellular membranes leading to virus entry into the host cell. Following initial binding to its host receptors, membrane fusion is mediated by the fusion machinery composed at least of gB and the heterodimer gH/gL. May be involved in the fusion between the virion envelope and the outer nuclear membrane during virion egress. The sequence is that of Envelope glycoprotein B from Homo sapiens (Human).